The chain runs to 304 residues: Elongation factor Ts (304 aa).

The segment at 79 to 82 (TDFV) is involved in Mg(2+) ion dislocation from EF-Tu.

This sequence belongs to the EF-Ts family.

The protein localises to the cytoplasm. Its function is as follows. Associates with the EF-Tu.GDP complex and induces the exchange of GDP to GTP. It remains bound to the aminoacyl-tRNA.EF-Tu.GTP complex up to the GTP hydrolysis stage on the ribosome. This Polaromonas sp. (strain JS666 / ATCC BAA-500) protein is Elongation factor Ts.